Consider the following 312-residue polypeptide: Malate dehydrogenase (312 aa).

NAD(+) contacts are provided by residues 7-13 (GAAGGIG) and Asp34. Residues Arg81 and Arg87 each coordinate substrate. NAD(+) contacts are provided by residues Asn94 and 117–119 (ITN). Residues Asn119 and Arg153 each contribute to the substrate site. The active-site Proton acceptor is the His177. Met227 contacts NAD(+).

The protein belongs to the LDH/MDH superfamily. MDH type 1 family. Homodimer.

It catalyses the reaction (S)-malate + NAD(+) = oxaloacetate + NADH + H(+). In terms of biological role, catalyzes the reversible oxidation of malate to oxaloacetate. The sequence is that of Malate dehydrogenase from Escherichia coli O139:H28 (strain E24377A / ETEC).